The primary structure comprises 148 residues: 3-dehydroquinate dehydratase (148 aa).

Tyr23 serves as the catalytic Proton acceptor. Substrate is bound by residues Asn74, His80, and Asp87. The Proton donor role is filled by His100. Residues 101 to 102 (IS) and Arg111 each bind substrate.

Belongs to the type-II 3-dehydroquinase family. In terms of assembly, homododecamer.

The catalysed reaction is 3-dehydroquinate = 3-dehydroshikimate + H2O. It participates in metabolic intermediate biosynthesis; chorismate biosynthesis; chorismate from D-erythrose 4-phosphate and phosphoenolpyruvate: step 3/7. In terms of biological role, catalyzes a trans-dehydration via an enolate intermediate. This Caldanaerobacter subterraneus subsp. tengcongensis (strain DSM 15242 / JCM 11007 / NBRC 100824 / MB4) (Thermoanaerobacter tengcongensis) protein is 3-dehydroquinate dehydratase.